The sequence spans 114 residues: MLFEVFGEVLASYIVSSKTKGELAFPVNNAPPDSLVAINCVVLFLRSAIGSCSGAKELIRSSALELSCSSSCGLPATDKPGSFHSGALSKSILSANEAVVSKSSLSFLSSFVDI.

Its subcellular location is the vacuole membrane. Its function is as follows. Required for vacuolar fusion. Involved in the early steps of the fusion pathway. The polypeptide is Vacuolar morphogenesis protein 10 (VAM10) (Saccharomyces cerevisiae (strain ATCC 204508 / S288c) (Baker's yeast)).